The primary structure comprises 385 residues: Glycine/sarcosine/betaine reductase complex component C subunit alpha (385 aa).

C359 is a catalytic residue.

In terms of assembly, heterooctamer of four alpha and four beta subunits. Component of the glycine, sarcosine and betaine reductase complexes, together with proteins A and B.

It catalyses the reaction acetyl phosphate + [thioredoxin]-disulfide + NH4(+) + H2O = [thioredoxin]-dithiol + glycine + phosphate + H(+). The catalysed reaction is acetyl phosphate + methylamine + [thioredoxin]-disulfide + H2O = sarcosine + [thioredoxin]-dithiol + phosphate + H(+). The enzyme catalyses acetyl phosphate + trimethylamine + [thioredoxin]-disulfide + H2O = glycine betaine + [thioredoxin]-dithiol + phosphate + H(+). Its function is as follows. In the first step of glycine, betaine and sarcosine reductases, the substrate is bound to component PB via a Schiff base intermediate. Then the PB-activated substrate is nucleophilically attacked by the selenol anion of component PA to transform it to a carboxymethylated selenoether and the respective amine. By action of component PC, acetyl phosphate is formed, leaving component PA in its oxidized state. Finally component PA becomes reduced by the thioredoxin system to start a new catalytic cycle of reductive deamination. This chain is Glycine/sarcosine/betaine reductase complex component C subunit alpha (grdD), found in Peptoclostridium acidaminophilum (Eubacterium acidaminophilum).